The chain runs to 237 residues: Large ribosomal subunit protein uL1 (237 aa).

Belongs to the universal ribosomal protein uL1 family. Part of the 50S ribosomal subunit.

Binds directly to 23S rRNA. The L1 stalk is quite mobile in the ribosome, and is involved in E site tRNA release. Its function is as follows. Protein L1 is also a translational repressor protein, it controls the translation of the L11 operon by binding to its mRNA. The chain is Large ribosomal subunit protein uL1 from Chloroflexus aurantiacus (strain ATCC 29364 / DSM 637 / Y-400-fl).